A 481-amino-acid polypeptide reads, in one-letter code: Tetratricopeptide repeat protein 29 (481 aa).

Over residues 1–18 (MASVGPVKTKTVTLKELT) the composition is skewed to low complexity. The tract at residues 1–53 (MASVGPVKTKTVTLKELTPPIPSPEKSACKGAKPDSNHMALVPVKPSQPGSGK) is disordered. TPR repeat units follow at residues 191–224 (CERC…AMES), 231–264 (QEVR…AMAL), 271–310 (VEAN…SQRV), 317–350 (ADSL…ARAA), 357–390 (KRAS…SEKA), and 397–430 (YRAT…ARKL).

As to quaternary structure, interacts with TAX-1.

The protein resides in the cytoplasm. The protein localises to the cytoskeleton. It is found in the flagellum axoneme. Functionally, axonemal protein which is implicated in axonemal and/or peri-axonemal structure assembly and regulates flagellum assembly and beating. This is Tetratricopeptide repeat protein 29 from Trypanosoma brucei brucei (strain 927/4 GUTat10.1).